Reading from the N-terminus, the 363-residue chain is MNIFQDWPEPIVRVQSLSESNLGAIPNRYVKPLSQRPNITPHNKHNPQTTTIPIIDLGRLYTDDLTLQAKTLDEISKACRELGFFQVVNHGMSPQLMDQAKATWREFFNLPMELKNMHANSPKTYEGYGSRLGVEKGAILDWSDYYYLHYQPSSLKDYTKWPSLPLHCREILEDYCKEMVKLCENLMKILSKNLGLQEDRLQNAFGGKEESGGCLRVNYYPKCPQPELTLGISPHSDPGGLTILLPDEQVASLQVRGSDDAWITVEPAPHAFIVNMGDQIQMLSNSIYKSVEHRVIVNPENERLSLAFFYNPKGNVPIEPLKELVTVDSPALYSSTTYDRYRQFIRTQGPRSKCHIDELKSPR.

In terms of domain architecture, Fe2OG dioxygenase spans 210–312 (ESGGCLRVNY…RLSLAFFYNP (103 aa)). R216 contributes to the jasmonate binding site. 2-oxoglutarate contacts are provided by N218 and Y220. The Fe cation site is built by H235, D237, and H293. 2-oxoglutarate-binding residues include R303 and S305. 2 residues coordinate jasmonate: R342 and R346.

This sequence belongs to the iron/ascorbate-dependent oxidoreductase family. It depends on L-ascorbate as a cofactor. The cofactor is Fe(2+).

The catalysed reaction is jasmonate + 2-oxoglutarate + O2 = (1R,2R)-12-hydroxyjasmonate + succinate + CO2. In terms of biological role, 2-oxoglutarate-dependent dioxygenase involved in the oxidation of jasmonate (JA), a stress-induced phytohormone synthesized in response to attack by pathogens and herbivores, which triggers the activation of defense responses via the JA-mediated signaling pathway. Converts JA to 12-hydroxyjasmonate (12OH-JA), an inactive form of JA. Is specific to free JA, and cannot oxidize the bioactive form jasmonoyl-L-isoleucine (JA-Ile) or other JA-amino acid conjugates. Prevents over-accumulation of JA and indirectly its bioactive form JA-Ile under stress response. Acts as a negative regulator of JA-mediated defense signaling, by contributing to 12OH-JA accumulation, which represses JA defense responses upon infection by the fungal pathogen Botrytis cinerea. Acts as a negative regulator of JA-mediated defense responses upon infestation by the herbivorous caterpillar Mamestra brassicae. The chain is Jasmonate-induced oxygenase 3 from Arabidopsis thaliana (Mouse-ear cress).